Consider the following 202-residue polypeptide: uncharacterized protein (202 aa).

The interval 178–202 (VCSSEDSEADRYSDYGWGGPSSPFN) is disordered.

This is an uncharacterized protein from Homo sapiens (Human).